The following is a 266-amino-acid chain: Probable septum site-determining protein MinC (266 aa).

The span at 1–21 (MSEAESTPVEEPVVESTEGSE) shows a compositional bias: low complexity. The disordered stretch occupies residues 1–28 (MSEAESTPVEEPVVESTEGSEAIPEVEQ).

The protein belongs to the MinC family. In terms of assembly, interacts with MinD and FtsZ.

Functionally, cell division inhibitor that blocks the formation of polar Z ring septums. Rapidly oscillates between the poles of the cell to destabilize FtsZ filaments that have formed before they mature into polar Z rings. Prevents FtsZ polymerization. This chain is Probable septum site-determining protein MinC, found in Thermosynechococcus vestitus (strain NIES-2133 / IAM M-273 / BP-1).